The chain runs to 296 residues: D-alanine--D-alanine ligase (296 aa).

The ATP-grasp domain maps to 99–292 (TYRVLDGYVN…FEELVDAIIQ (194 aa)). 125–176 (GFPCVIKPRKEGSSIGVHICDNSNQLYNDLSEELKKYNEMMIQRYIEGRELT) lines the ATP pocket. 3 residues coordinate Mg(2+): Asp-247, Glu-259, and Asn-261.

The protein belongs to the D-alanine--D-alanine ligase family. Mg(2+) serves as cofactor. Requires Mn(2+) as cofactor.

The protein resides in the cytoplasm. It carries out the reaction 2 D-alanine + ATP = D-alanyl-D-alanine + ADP + phosphate + H(+). Its pathway is cell wall biogenesis; peptidoglycan biosynthesis. In terms of biological role, cell wall formation. This is D-alanine--D-alanine ligase from Pseudothermotoga lettingae (strain ATCC BAA-301 / DSM 14385 / NBRC 107922 / TMO) (Thermotoga lettingae).